A 141-amino-acid chain; its full sequence is Large ribosomal subunit protein uL11 (141 aa).

It belongs to the universal ribosomal protein uL11 family. In terms of assembly, part of the ribosomal stalk of the 50S ribosomal subunit. Interacts with L10 and the large rRNA to form the base of the stalk. L10 forms an elongated spine to which L12 dimers bind in a sequential fashion forming a multimeric L10(L12)X complex. One or more lysine residues are methylated.

Forms part of the ribosomal stalk which helps the ribosome interact with GTP-bound translation factors. This is Large ribosomal subunit protein uL11 from Lactococcus lactis subsp. lactis (strain IL1403) (Streptococcus lactis).